Consider the following 123-residue polypeptide: Ribonuclease P protein component (123 aa).

The protein belongs to the RnpA family. Consists of a catalytic RNA component (M1 or rnpB) and a protein subunit.

The enzyme catalyses Endonucleolytic cleavage of RNA, removing 5'-extranucleotides from tRNA precursor.. RNaseP catalyzes the removal of the 5'-leader sequence from pre-tRNA to produce the mature 5'-terminus. It can also cleave other RNA substrates such as 4.5S RNA. The protein component plays an auxiliary but essential role in vivo by binding to the 5'-leader sequence and broadening the substrate specificity of the ribozyme. The polypeptide is Ribonuclease P protein component (Streptomyces griseus subsp. griseus (strain JCM 4626 / CBS 651.72 / NBRC 13350 / KCC S-0626 / ISP 5235)).